The primary structure comprises 120 residues: Protein TCL1B4 (120 aa).

Belongs to the TCL1 family.

This chain is Protein TCL1B4 (Tcl1b4), found in Mus musculus (Mouse).